Reading from the N-terminus, the 861-residue chain is ToMV resistance protein Tm-2(2) (861 aa).

A coiled-coil region spans residues 63–83; it reads VKNLLKDIQELAGDVEDLLDD. Positions 162 to 388 constitute an NB-ARC domain; it reads DDFNMLQAKL…LESMGHKVQD (227 aa). 185–192 is a binding site for ATP; it reads GMPGLGKT. 13 LRR repeats span residues 225–248, 305–327, 388–411, 449–472, 510–536, 585–608, 609–631, 652–680, 689–710, 712–735, 736–758, 784–810, and 811–835; these read LDIAKQIGLTEQKMKENLEDNLRS, LHALQPLESEKSFELFTKKIFNF, DGCAKVLALSYNDLPIASRPCFLY, LAEDVLNDLVSRNLIQLAKRTYNG, VARLRRITFYSDNVMIEFFRSNPKLEK, MTCLRYLRLEGNICGKLPNSIVKL, TRLETIDIDRRSLIQPPSGVWES, ISSFYPNIYSLHPNNLQTLMWIPDKFFEP, LRKLGILGVSNSTVKMLSIFSP, LKALEVLKLSFSSDPSEQIKLSSY, PHIAKLHLNVNRTMALNSQSFPP, LRKLKMFICKYNEEKMDLSGEANGYSF, and PQLEVLHIHSPNGLSEVTCTDDVSM.

It belongs to the disease resistance NB-LRR family. As to quaternary structure, (Microbial infection) Interacts with tobamoviruses mouvement protein (e.g. tobacco mosaic virus (TMV) MP, AC P03583) at the plasma membrane; this interaction triggers defense responses leading to programmed cell death. In terms of assembly, binds to HSP90 proteins (e.g. HSP90-1 and Nicotiana benthamiana HSP90-1); this interaction seems required for defense responses toward tobamoviruses.

It is found in the cell membrane. Its function is as follows. Inhibitor of viral mouvements which confers resistance to some tobamoviruses including tomato mosaic virus (ToMV) (e.g. strains L, B7 and ToMV1-2) and tobacco mosaic virus (TMV), but not to resistance-breaking isolates (e.g. LIIA and ToMV2(2)) ToMV and tomato brown rugose fruit virus (ToBRFV). Elicits a hypersensitive reaction in response to avirulent (Avr) movement proteins from resistance inducing tobamoviruses (e.g. ToMV and TMV) strains, thus leading to programmed cell death; this local extreme resistance requires rbcS. The polypeptide is ToMV resistance protein Tm-2(2) (Solanum lycopersicum (Tomato)).